The sequence spans 156 residues: Oxidized purine nucleoside triphosphate hydrolase (156 aa).

Residues T3–K132 form the Nudix hydrolase domain. 2-oxo-dATP is bound at residue T8. K23 serves as a coordination point for 8-oxo-dGTP. 2-oxo-dATP-binding positions include N33 and F35–K38. 5 residues coordinate Mg(2+): G36, E52, E55, E56, and E100. The Nudix box motif lies at G37–G58. Residue W117 to D120 coordinates 2-oxo-dATP.

The protein belongs to the Nudix hydrolase family. In terms of assembly, monomer. Mg(2+) serves as cofactor.

The protein localises to the cytoplasm. It is found in the nucleus. Its subcellular location is the nucleus membrane. The protein resides in the cytoplasmic vesicle. It localises to the secretory vesicle. The protein localises to the acrosome. It catalyses the reaction 2-oxo-dATP + H2O = 2-oxo-dAMP + diphosphate + H(+). The enzyme catalyses 2-oxo-ATP + H2O = 2-oxo-AMP + diphosphate + H(+). It carries out the reaction 8-oxo-dGTP + H2O = 8-oxo-dGMP + diphosphate + H(+). The catalysed reaction is 8-oxo-dATP + H2O = 8-oxo-dAMP + diphosphate + H(+). It catalyses the reaction O(6)-methyl-dGTP + H2O = O(6)-methyl-dGMP + diphosphate + H(+). The enzyme catalyses N(6)-methyl-dATP + H2O = N(6)-methyl-dAMP + diphosphate + H(+). It carries out the reaction N(6)-methyl-ATP + H2O = N(6)-methyl-AMP + diphosphate + H(+). In terms of biological role, oxidized purine nucleoside triphosphate hydrolase which is a prominent sanitizer of the oxidized nucleotide pool. Catalyzes the hydrolysis of 2-oxo-dATP (2-hydroxy-dATP) into 2-oxo-dAMP. Also has a significant hydrolase activity toward 2-oxo-ATP, 8-oxo-dGTP and 8-oxo-dATP. Through the hydrolysis of oxidized purine nucleoside triphosphates, prevents their incorporation into DNA and the subsequent transversions A:T to C:G and G:C to T:A. Also catalyzes the hydrolysis of methylated purine nucleoside triphosphate preventing their integration into DNA. Through this antimutagenic activity protects cells from oxidative stress. The polypeptide is Oxidized purine nucleoside triphosphate hydrolase (NUDT1) (Canis lupus familiaris (Dog)).